We begin with the raw amino-acid sequence, 295 residues long: 33 kDa chaperonin (295 aa).

Intrachain disulfides connect Cys-237–Cys-239 and Cys-270–Cys-273.

Belongs to the HSP33 family. In terms of processing, under oxidizing conditions two disulfide bonds are formed involving the reactive cysteines. Under reducing conditions zinc is bound to the reactive cysteines and the protein is inactive.

It localises to the cytoplasm. Functionally, redox regulated molecular chaperone. Protects both thermally unfolding and oxidatively damaged proteins from irreversible aggregation. Plays an important role in the bacterial defense system toward oxidative stress. The chain is 33 kDa chaperonin from Shouchella clausii (strain KSM-K16) (Alkalihalobacillus clausii).